A 124-amino-acid polypeptide reads, in one-letter code: Small ribosomal subunit protein uS13 (124 aa).

The segment at 95–124 (GLPVRGQRTKTNARTRKGPKRTVAGKKKAR) is disordered.

This sequence belongs to the universal ribosomal protein uS13 family. In terms of assembly, part of the 30S ribosomal subunit. Forms a loose heterodimer with protein S19. Forms two bridges to the 50S subunit in the 70S ribosome.

Located at the top of the head of the 30S subunit, it contacts several helices of the 16S rRNA. In the 70S ribosome it contacts the 23S rRNA (bridge B1a) and protein L5 of the 50S subunit (bridge B1b), connecting the 2 subunits; these bridges are implicated in subunit movement. Contacts the tRNAs in the A and P-sites. The chain is Small ribosomal subunit protein uS13 from Leifsonia xyli subsp. xyli (strain CTCB07).